We begin with the raw amino-acid sequence, 93 residues long: Secretoglobin family 3A member 2 (93 aa).

The first 21 residues, 1 to 21 (MKLVTIFLLVTISLCSYSATA), serve as a signal peptide directing secretion.

It belongs to the secretoglobin family. UGRP subfamily. As to quaternary structure, homodimer; disulfide-linked. Monomer. Interacts with APOA1. Highly expressed in lung and trachea. Detected throughout the airway epithelium in lung, with slightly higher expression in large airways. Found in lung submucosal gland acinus where it localizes to serous-like cells. Probably expressed in club cells of the bronchioles. Not detected in other tissues tested.

It localises to the secreted. Secreted cytokine-like protein. Binds to the scavenger receptor MARCO. Can also bind to pathogens including the Gram-positive bacterium L.monocytogenes, the Gram-negative bacterium P.aeruginosa, and yeast. Strongly inhibits phospholipase A2 (PLA2G1B) activity. Seems to have anti-inflammatory effects in respiratory epithelium. Also has anti-fibrotic activity in lung. May play a role in fetal lung development and maturation. Promotes branching morphogenesis during early stages of lung development. In the pituitary, may inhibit production of follicle-stimulating hormone (FSH) and luteinizing hormone (LH). This is Secretoglobin family 3A member 2 (SCGB3A2) from Homo sapiens (Human).